Here is a 404-residue protein sequence, read N- to C-terminus: Cysteine desulfurase IscS (404 aa).

Pyridoxal 5'-phosphate-binding positions include 75 to 76 (AT), N155, Q183, and 203 to 205 (SGH). K206 carries the N6-(pyridoxal phosphate)lysine modification. T243 contacts pyridoxal 5'-phosphate. Residue C328 is the Cysteine persulfide intermediate of the active site. C328 is a binding site for [2Fe-2S] cluster.

Belongs to the class-V pyridoxal-phosphate-dependent aminotransferase family. NifS/IscS subfamily. In terms of assembly, homodimer. Forms a heterotetramer with IscU, interacts with other sulfur acceptors. It depends on pyridoxal 5'-phosphate as a cofactor.

The protein resides in the cytoplasm. It carries out the reaction (sulfur carrier)-H + L-cysteine = (sulfur carrier)-SH + L-alanine. Its pathway is cofactor biosynthesis; iron-sulfur cluster biosynthesis. In terms of biological role, master enzyme that delivers sulfur to a number of partners involved in Fe-S cluster assembly, tRNA modification or cofactor biosynthesis. Catalyzes the removal of elemental sulfur and selenium atoms from cysteine and selenocysteine to produce alanine. Functions as a sulfur delivery protein for Fe-S cluster synthesis onto IscU, an Fe-S scaffold assembly protein, as well as other S acceptor proteins. Also functions as a selenium delivery protein in the pathway for the biosynthesis of selenophosphate. In Salmonella gallinarum (strain 287/91 / NCTC 13346), this protein is Cysteine desulfurase IscS.